The primary structure comprises 701 residues: Dynein axonemal intermediate chain 1 (701 aa).

Disordered regions lie at residues 1–45 and 119–165; these read MPSK…VRPP and EMVA…DIPA. Serine 124 and serine 127 each carry phosphoserine. The segment covering 136 to 155 has biased composition (acidic residues); sequence ENLEEEEEPKEGEGEAEAEA. WD repeat units follow at residues 382 to 422, 431 to 474, 539 to 579, 581 to 621, and 629 to 668; these read SSES…SQPC, KHTD…LVHI, AHNM…PMFI, DLNS…YEAI, and KKKNKITHVQFNPIHPIIIVGDDRGHIICLKLSPNLRKMP.

The protein belongs to the dynein intermediate chain family. As to quaternary structure, consists of at least two heavy chains and a number of intermediate and light chains. Interacts with BICD2. Interacts with CFAP45 and CFAP52. Interacts with CFAP53.

Its subcellular location is the cytoplasm. The protein localises to the cytoskeleton. The protein resides in the cilium axoneme. Its function is as follows. Part of the dynein complex of respiratory cilia. The protein is Dynein axonemal intermediate chain 1 (Dnai1) of Mus musculus (Mouse).